The primary structure comprises 298 residues: uncharacterized protein (298 aa).

The span at 1 to 17 (MLTKSAENKRNRKDDSM) shows a compositional bias: basic and acidic residues. The interval 1 to 22 (MLTKSAENKRNRKDDSMRPGQQ) is disordered. The region spanning 167–227 (NKELTGTVYR…EDGSVNLSLL (61 aa)) is the S1 motif domain.

This is an uncharacterized protein from Bacillus subtilis (strain 168).